Here is a 120-residue protein sequence, read N- to C-terminus: Small ribosomal subunit protein uS13 (120 aa).

A disordered region spans residues 92-120; that stretch reads HRKGLPVRGQTTKNNARTRKGKKKTVGSK. Over residues 107–120 the composition is skewed to basic residues; that stretch reads ARTRKGKKKTVGSK.

Belongs to the universal ribosomal protein uS13 family. In terms of assembly, part of the 30S ribosomal subunit. Forms a loose heterodimer with protein S19. Forms two bridges to the 50S subunit in the 70S ribosome.

Functionally, located at the top of the head of the 30S subunit, it contacts several helices of the 16S rRNA. In the 70S ribosome it contacts the 23S rRNA (bridge B1a) and protein L5 of the 50S subunit (bridge B1b), connecting the 2 subunits; these bridges are implicated in subunit movement. Contacts the tRNAs in the A and P-sites. This chain is Small ribosomal subunit protein uS13, found in Helicobacter hepaticus (strain ATCC 51449 / 3B1).